A 708-amino-acid chain; its full sequence is Exocyst complex component 8 (708 aa).

Positions 168-268 (YLVYNGDLLE…WLEVLEETKR (101 aa)) constitute a PH domain. Over residues 271 to 282 (ALSEKRRLEQEA) the composition is skewed to basic and acidic residues. A disordered region spans residues 271–314 (ALSEKRRLEQEALPRPAPTPPESTNPFEEEEEEEEEPSAEEEAV). A compositionally biased stretch (acidic residues) spans 297 to 314 (FEEEEEEEEEPSAEEEAV).

It belongs to the EXO84 family. As to quaternary structure, the exocyst complex is composed of EXOC1, EXOC2, EXOC3, EXOC4, EXOC5, EXOC6, EXOC7 and EXOC8.

Its subcellular location is the cytoplasm. The protein resides in the perinuclear region. It localises to the cell projection. The protein localises to the growth cone. Its function is as follows. Component of the exocyst complex involved in the docking of exocytic vesicles with fusion sites on the plasma membrane. The chain is Exocyst complex component 8 (EXOC8) from Gallus gallus (Chicken).